Reading from the N-terminus, the 127-residue chain is Modulator protein MzrA (127 aa).

Topologically, residues 1–10 (MQIPRMSLRQ) are cytoplasmic. Residues 11 to 31 (LAWSGAVLLLVGTLLLAWSAV) form a helical membrane-spanning segment. The Periplasmic portion of the chain corresponds to 32 to 127 (RQQESTLAIR…RLRDNSHRFG (96 aa)).

Belongs to the MzrA family. Interacts with EnvZ.

It localises to the cell inner membrane. Functionally, modulates the activity of the EnvZ/OmpR two-component regulatory system, probably by directly modulating EnvZ enzymatic activity and increasing stability of phosphorylated OmpR. Links the two-component systems CpxA/CpxR and EnvZ/OmpR. This is Modulator protein MzrA from Escherichia coli (strain K12).